We begin with the raw amino-acid sequence, 207 residues long: 3-demethoxyubiquinol 3-hydroxylase (207 aa).

Residues 22 to 32 (ERANPADRLAP) show a composition bias toward basic and acidic residues. The disordered stretch occupies residues 22-41 (ERANPADRLAPETEQMNPEE). Fe cation is bound by residues E56, E86, H89, E138, E170, and H173.

Belongs to the COQ7 family. Requires Fe cation as cofactor.

The protein resides in the cell membrane. It carries out the reaction a 5-methoxy-2-methyl-3-(all-trans-polyprenyl)benzene-1,4-diol + AH2 + O2 = a 3-demethylubiquinol + A + H2O. It functions in the pathway cofactor biosynthesis; ubiquinone biosynthesis. Functionally, catalyzes the hydroxylation of 2-nonaprenyl-3-methyl-6-methoxy-1,4-benzoquinol during ubiquinone biosynthesis. This chain is 3-demethoxyubiquinol 3-hydroxylase, found in Cupriavidus metallidurans (strain ATCC 43123 / DSM 2839 / NBRC 102507 / CH34) (Ralstonia metallidurans).